A 76-amino-acid chain; its full sequence is Antimicrobial peptide lumbricin-1 (76 aa).

Residues methionine 1–threonine 14 constitute a propeptide, removed in mature form.

Displays antimicrobial activity against the Gram-positive bacteria B.subtilis ATCC 62037, S.aureus ATCC 15752 and S.mutans ATCC 25175, the Gram-negative bacteria E.coli ATCC 27325, P.putida ATCC 17426 and Serratia sp. ATCC 21074, and the fungi C.albicans ATCC 10231, C.neoformans ATCC 34881 and S.cerevisiae ATCC 44774. Does not possess hemolytic activity. This is Antimicrobial peptide lumbricin-1 from Lumbricus rubellus (Humus earthworm).